The following is a 407-amino-acid chain: Argininosuccinate synthase (407 aa).

Residues 12–20 and Ala-39 contribute to the ATP site; that span reads AFSGGLDTS. Tyr-90 and Ser-95 together coordinate L-citrulline. Gly-120 provides a ligand contact to ATP. The L-aspartate site is built by Thr-122, Asn-126, and Asp-127. Residue Asn-126 participates in L-citrulline binding. L-citrulline contacts are provided by Arg-130, Ser-181, Ser-190, Glu-266, and Tyr-278.

It belongs to the argininosuccinate synthase family. Type 1 subfamily. Homotetramer.

The protein resides in the cytoplasm. It carries out the reaction L-citrulline + L-aspartate + ATP = 2-(N(omega)-L-arginino)succinate + AMP + diphosphate + H(+). It functions in the pathway amino-acid biosynthesis; L-arginine biosynthesis; L-arginine from L-ornithine and carbamoyl phosphate: step 2/3. This chain is Argininosuccinate synthase, found in Nitrosospira multiformis (strain ATCC 25196 / NCIMB 11849 / C 71).